The primary structure comprises 341 residues: Abnormal cell lineage protein 44 (341 aa).

The signal sequence occupies residues 1–21 (MRALYFRTTTLSTFFILCSLA). 11 disulfide bridges follow: Cys-84–Cys-95, Cys-134–Cys-142, Cys-144–Cys-158, Cys-206–Cys-220, Cys-208–Cys-215, Cys-265–Cys-292, Cys-275–Cys-287, Cys-291–Cys-331, Cys-307–Cys-322, Cys-309–Cys-319, and Cys-314–Cys-315. Ser-212 carries O-palmitoleoyl serine; by mom-1 lipidation. N-linked (GlcNAc...) asparagine glycosylation occurs at Asn-279.

Belongs to the Wnt family. In terms of processing, palmitoleoylation is required for efficient binding to frizzled receptors. Depalmitoleoylation leads to Wnt signaling pathway inhibition.

The protein resides in the secreted. It localises to the extracellular space. Its subcellular location is the extracellular matrix. Functionally, ligand for members of the frizzled family of seven transmembrane receptors. Affects male tail development, vulval precursor cell specification and egg laying. Involved in morphogenesis by influencing polarity of asymmetric cell divisions of the B, U, and F cells in the male, and the T cell in males and hermaphrodites. Controls spindle orientation in B-gamma cell division during male copulatory spicule development. Involved in specification of the P7.p lineage during vulval development. Has a role in providing polarity and default lin-17 localization in axon development and positioning of neuromuscular synapses in DA9 regions by negatively regulating synaptogenesis. This Caenorhabditis briggsae protein is Abnormal cell lineage protein 44.